Here is a 261-residue protein sequence, read N- to C-terminus: Triosephosphate isomerase (261 aa).

10–12 (NWK) serves as a coordination point for substrate. The Electrophile role is filled by histidine 100. Residue glutamate 172 is the Proton acceptor of the active site. Substrate-binding positions include glycine 178, serine 218, and 239-240 (GG).

This sequence belongs to the triosephosphate isomerase family. As to quaternary structure, homodimer.

Its subcellular location is the cytoplasm. The enzyme catalyses D-glyceraldehyde 3-phosphate = dihydroxyacetone phosphate. It participates in carbohydrate biosynthesis; gluconeogenesis. Its pathway is carbohydrate degradation; glycolysis; D-glyceraldehyde 3-phosphate from glycerone phosphate: step 1/1. In terms of biological role, involved in the gluconeogenesis. Catalyzes stereospecifically the conversion of dihydroxyacetone phosphate (DHAP) to D-glyceraldehyde-3-phosphate (G3P). In Mycobacterium leprae (strain TN), this protein is Triosephosphate isomerase.